Here is an 824-residue protein sequence, read N- to C-terminus: uncharacterized protein (824 aa).

This is an uncharacterized protein from Caenorhabditis elegans.